Consider the following 379-residue polypeptide: Cytochrome b (379 aa).

The next 4 membrane-spanning stretches (helical) occupy residues 33-53 (FGSL…FLAM), 77-98 (WLIR…FIHV), 113-133 (WNIG…GYVL), and 178-198 (FFAF…VHLL). Residues His83 and His97 each contribute to the heme b site. Heme b contacts are provided by His182 and His196. An a ubiquinone-binding site is contributed by His201. 4 consecutive transmembrane segments (helical) span residues 226–246 (IKDL…ALFF), 288–308 (LGGV…PLLN), 320–340 (ITQT…WIGG), and 347–367 (FTMI…ILXP).

Belongs to the cytochrome b family. As to quaternary structure, the cytochrome bc1 complex contains 11 subunits: 3 respiratory subunits (MT-CYB, CYC1 and UQCRFS1), 2 core proteins (UQCRC1 and UQCRC2) and 6 low-molecular weight proteins (UQCRH/QCR6, UQCRB/QCR7, UQCRQ/QCR8, UQCR10/QCR9, UQCR11/QCR10 and a cleavage product of UQCRFS1). This cytochrome bc1 complex then forms a dimer. The cofactor is heme b.

It localises to the mitochondrion inner membrane. Component of the ubiquinol-cytochrome c reductase complex (complex III or cytochrome b-c1 complex) that is part of the mitochondrial respiratory chain. The b-c1 complex mediates electron transfer from ubiquinol to cytochrome c. Contributes to the generation of a proton gradient across the mitochondrial membrane that is then used for ATP synthesis. The protein is Cytochrome b (MT-CYB) of Akodon toba (Chaco grass mouse).